The primary structure comprises 1063 residues: Error-prone DNA polymerase (1063 aa).

Belongs to the DNA polymerase type-C family. DnaE2 subfamily.

The protein localises to the cytoplasm. The catalysed reaction is DNA(n) + a 2'-deoxyribonucleoside 5'-triphosphate = DNA(n+1) + diphosphate. Its function is as follows. DNA polymerase involved in damage-induced mutagenesis and translesion synthesis (TLS). It is not the major replicative DNA polymerase. The protein is Error-prone DNA polymerase of Burkholderia mallei (strain ATCC 23344).